Consider the following 347-residue polypeptide: NHL repeat-containing protein 3 (347 aa).

Positions 1–22 (MARAWVCLAGAAFFLSCLVLHS) are cleaved as a signal peptide. The stretch at 47–93 (RLDLGWPKNSEYFTGATFCVAVDSLNGLVYVAQRGDNIPKVLVFSED) is one NHL 1 repeat. Asn-101 carries an N-linked (GlcNAc...) asparagine glycan. 2 NHL repeats span residues 150–196 (TPGK…LSQD) and 200–243 (LWLR…FDKD). N-linked (GlcNAc...) asparagine glycans are attached at residues Asn-206 and Asn-278. One copy of the NHL 4 repeat lies at 294–338 (GDCSVVSTIQLADQVLPHLLEVDRKTGAVYVAEIGAKQIQKYIPW).

The sequence is that of NHL repeat-containing protein 3 (Nhlrc3) from Mus musculus (Mouse).